The primary structure comprises 902 residues: Zinc finger CCCH-type antiviral protein 1 (902 aa).

Residue A2 is modified to N-acetylalanine. The segment at 2-254 is N-terminal domain; that stretch reads ADPEVCCFIT…ARSKSRDRFF (253 aa). The short motif at 69–76 is the Nuclear localization signal element; it reads RARVCRRK. C3H1-type zinc fingers lie at residues 73–86, 88–110, 150–172, and 169–193; these read CRRK…DNLH, CKLN…KYSH, CKSY…SRLH, and SRLH…SHNL. Residues 221 to 251 are disordered; the sequence is SKHMQKNPPGPRAPSSHRRNMAYRARSKSRD. A binding to EXOSC5 region spans residues 224-254; sequence MQKNPPGPRAPSSHRRNMAYRARSKSRDRFF. The span at 235-247 shows a compositional bias: basic residues; it reads SSHRRNMAYRARS. A phosphoserine; by GSK3-beta mark is found at S257, S263, S267, and S271. Over residues 265–278 the composition is skewed to polar residues; it reads SASAERSCTPSPDQ. Disordered stretches follow at residues 265–287 and 299–373; these read SASA…SLED and YLGS…GARR. The residue at position 273 (T273) is a Phosphothreonine. Phosphoserine is present on residues S275 and S284. A Nuclear export signal motif is present at residues 285-292; the sequence is LEDAPVDD. S302, S327, S335, S355, S378, and S387 each carry phosphoserine. Composition is skewed to polar residues over residues 310–336 and 344–369; these read SGSS…NGSQ and PGST…TNDQ. The residue at position 393 (T393) is a Phosphothreonine. 4 positions are modified to phosphoserine: S407, S469, S492, and S494. The disordered stretch occupies residues 445 to 481; it reads LNYKSTSSGHREISSPRIQDAGPASRDVQATGRIADD. A Phosphothreonine modification is found at T554. 2 positions are modified to phosphoserine: Y572 and S590. The WWE domain occupies 594-681; that stretch reads SVTKPANSVF…ASKTQKDVIR (88 aa). In terms of domain architecture, PARP catalytic spans 716 to 902; it reads PQEDFCFLSS…YTEDKACVIS (187 aa).

This sequence belongs to the ARTD/PARP family. Homodimer or homooligomer. Homooligomerization is essential for its antiviral activity. Interacts with EXOSC5. Interacts (via N-terminal domain) with DDX17 in an RNA-independent manner. Interacts with EXOSC3, EXOSC7, DCP2 and DCP1A. Interacts with PARN in an RNA-independent manner. Interacts with XRN1 in an RNA-dependent manner. Isoform 2 interacts (via zinc-fingers) with RIGI in an RNA-dependent manner. Interacts (via N-terminal domain) with DHX30 (via N-terminus) in an RNA-independent manner. Post-translationally, phosphorylation at Ser-275 is essential for sequential phosphorylation of Ser-271, Ser-267, Ser-263 and Ser-257 by GSK3-beta. Phosphorylation by GSK3-beta enhances its antiviral activity.

It is found in the cytoplasm. It localises to the nucleus. Functionally, antiviral protein which inhibits the replication of viruses by recruiting the cellular RNA degradation machineries to degrade the viral mRNAs. Binds to a ZAP-responsive element (ZRE) present in the target viral mRNA, recruits cellular poly(A)-specific ribonuclease PARN to remove the poly(A) tail, and the 3'-5' exoribonuclease complex exosome to degrade the RNA body from the 3'-end. It also recruits the decapping complex DCP1-DCP2 through RNA helicase p72 (DDX17) to remove the cap structure of the viral mRNA to initiate its degradation from the 5'-end. Its target viruses belong to families which include retroviridae: human immunodeficiency virus type 1 (HIV-1), moloney and murine leukemia virus (MoMLV) and xenotropic MuLV-related virus (XMRV), filoviridae: ebola virus (EBOV) and marburg virus (MARV), togaviridae: sindbis virus (SINV) and Ross river virus (RRV). Specifically targets the multiply spliced but not unspliced or singly spliced HIV-1 mRNAs for degradation. Isoform 1 is a more potent viral inhibitor than isoform 2. Isoform 2 acts as a positive regulator of RIGI signaling resulting in activation of the downstream effector IRF3 leading to the expression of type I IFNs and IFN stimulated genes (ISGs). The polypeptide is Zinc finger CCCH-type antiviral protein 1 (Homo sapiens (Human)).